A 1250-amino-acid polypeptide reads, in one-letter code: Immunoglobulin superfamily DCC subclass member 4 (1250 aa).

Positions 1–24 are cleaved as a signal peptide; that stretch reads MARGDAGRGRGLLALTFCLLAARG. The Extracellular portion of the chain corresponds to 25 to 957; it reads ELLLPQETTV…SDSLDMHSVT (933 aa). Ig-like C2-type domains lie at 29–137, 143–229, 242–330, and 335–421; these read PQET…TAVV, ADFS…ALLS, QDVV…AELR, and PAIT…ASLA. Cys57 and Cys121 are disulfide-bonded. Asn90, Asn102, and Asn157 each carry an N-linked (GlcNAc...) asparagine glycan. A disulfide bridge links Cys164 with Cys212. Residue Asn252 is glycosylated (N-linked (GlcNAc...) asparagine). Disulfide bonds link Cys265–Cys312 and Cys356–Cys405. 5 Fibronectin type-III domains span residues 431–525, 527–623, 632–741, 752–845, and 850–945; these read APTR…TLDD, PSAA…TPSM, APAE…APAP, PPAH…TLPD, and PPSD…TLQE. An N-linked (GlcNAc...) asparagine glycan is attached at Asn582. The helical transmembrane segment at 958-978 threads the bilayer; sequence GIIVGVCLGLLCLLACMCAGL. The Cytoplasmic portion of the chain corresponds to 979–1250; the sequence is RRSPHRESLP…LPRSPVSSSA (272 aa). Phosphothreonine is present on Thr995. Disordered regions lie at residues 1140-1175 and 1215-1250; these read SASN…DPGQ and PGEV…SSSA.

The protein belongs to the immunoglobulin superfamily. DCC family.

Its subcellular location is the cell membrane. The chain is Immunoglobulin superfamily DCC subclass member 4 (IGDCC4) from Homo sapiens (Human).